A 198-amino-acid polypeptide reads, in one-letter code: MVTTYLLFIVAYLLGSIPFALVVGKIGYGIDIREHGSGNLGGTNTFRTLGKKAGFIVTIADILKGTLATSLPIIFALDIHPLWFGLAAVLGHVYPIFAKFRGGKAVATSAGVLLCYSPVVFAILAVVFFSLLFTTRYVSLSSMVTAVVAVIASIVSGDKIFIIAMCLLAGMVIYKHRANIGRIINKTEPKANFSKKQK.

A run of 4 helical transmembrane segments spans residues 4–24 (TYLL…LVVG), 71–91 (LPII…AVLG), 113–133 (LLCY…SLLF), and 147–167 (VVAV…AMCL).

The protein belongs to the PlsY family. In terms of assembly, probably interacts with PlsX.

It localises to the cell membrane. It catalyses the reaction an acyl phosphate + sn-glycerol 3-phosphate = a 1-acyl-sn-glycero-3-phosphate + phosphate. Its pathway is lipid metabolism; phospholipid metabolism. Its function is as follows. Catalyzes the transfer of an acyl group from acyl-phosphate (acyl-PO(4)) to glycerol-3-phosphate (G3P) to form lysophosphatidic acid (LPA). This enzyme utilizes acyl-phosphate as fatty acyl donor, but not acyl-CoA or acyl-ACP. The sequence is that of Glycerol-3-phosphate acyltransferase 2 from Bacillus cereus (strain ATCC 10987 / NRS 248).